The primary structure comprises 90 residues: Evasin P458 (90 aa).

An N-terminal signal peptide occupies residues 1–24 (MEVKTFAFLQIAVLIAFSLHSASA). Cystine bridges form between Cys44-Cys63, Cys48-Cys65, and Cys59-Cys76. A glycan (N-linked (GlcNAc...) asparagine) is linked at Asn47.

It localises to the secreted. In terms of biological role, salivary chemokine-binding protein which binds to host chemokines CXCL1, CXCL2, CXCL3, CXCL5, CXCL6 and CXCL13. In Ixodes ricinus (Common tick), this protein is Evasin P458.